The chain runs to 807 residues: Putative histidine biosynthesis bifunctional protein HisCD (807 aa).

The segment at 1 to 440 (MTDHFDTLIR…ALNIAGQGVN (440 aa)) is histidinol dehydrogenase. Gln261 and His264 together coordinate Zn(2+). Active-site residues include Glu328 and His329. Zn(2+)-binding residues include Asp362 and His421. The interval 441–807 (MNNIFDANLL…VNEQPKEIAN (367 aa)) is histidinol-phosphate aminotransferase. N6-(pyridoxal phosphate)lysine is present on Lys655.

The protein in the N-terminal section; belongs to the histidinol dehydrogenase family. In the C-terminal section; belongs to the class-II pyridoxal-phosphate-dependent aminotransferase family. Histidinol-phosphate aminotransferase subfamily. As to quaternary structure, homodimer. Zn(2+) serves as cofactor. It depends on pyridoxal 5'-phosphate as a cofactor.

The catalysed reaction is L-histidinol phosphate + 2-oxoglutarate = 3-(imidazol-4-yl)-2-oxopropyl phosphate + L-glutamate. It carries out the reaction L-histidinol + 2 NAD(+) + H2O = L-histidine + 2 NADH + 3 H(+). The protein operates within amino-acid biosynthesis; L-histidine biosynthesis; L-histidine from 5-phospho-alpha-D-ribose 1-diphosphate: step 7/9. It participates in amino-acid biosynthesis; L-histidine biosynthesis; L-histidine from 5-phospho-alpha-D-ribose 1-diphosphate: step 9/9. Catalyzes the sequential NAD-dependent oxidations of L-histidinol to L-histidinaldehyde and then to L-histidine. This Photorhabdus laumondii subsp. laumondii (strain DSM 15139 / CIP 105565 / TT01) (Photorhabdus luminescens subsp. laumondii) protein is Putative histidine biosynthesis bifunctional protein HisCD (hisCD).